Here is a 371-residue protein sequence, read N- to C-terminus: Glutamate 5-kinase (371 aa).

Position 8 (lysine 8) interacts with ATP. Serine 49, aspartate 136, and asparagine 149 together coordinate substrate. Residues 169 to 170 and 213 to 219 contribute to the ATP site; these read TD and TGGMATK. Residues 278-356 enclose the PUA domain; sequence TGKLILDDGA…EDIPQVLGYA (79 aa).

The protein belongs to the glutamate 5-kinase family.

It is found in the cytoplasm. It carries out the reaction L-glutamate + ATP = L-glutamyl 5-phosphate + ADP. Its pathway is amino-acid biosynthesis; L-proline biosynthesis; L-glutamate 5-semialdehyde from L-glutamate: step 1/2. Functionally, catalyzes the transfer of a phosphate group to glutamate to form L-glutamate 5-phosphate. The protein is Glutamate 5-kinase of Acaryochloris marina (strain MBIC 11017).